The primary structure comprises 203 residues: Glycerol-3-phosphate acyltransferase (203 aa).

5 consecutive transmembrane segments (helical) span residues 13-33 (TLAC…LILT), 62-82 (LAAA…AIAS), 88-108 (AGIA…WLSF), 118-138 (IGVL…IWLA), and 159-179 (IALY…MTAI).

This sequence belongs to the PlsY family. In terms of assembly, probably interacts with PlsX.

Its subcellular location is the cell inner membrane. It catalyses the reaction an acyl phosphate + sn-glycerol 3-phosphate = a 1-acyl-sn-glycero-3-phosphate + phosphate. The protein operates within lipid metabolism; phospholipid metabolism. Functionally, catalyzes the transfer of an acyl group from acyl-phosphate (acyl-PO(4)) to glycerol-3-phosphate (G3P) to form lysophosphatidic acid (LPA). This enzyme utilizes acyl-phosphate as fatty acyl donor, but not acyl-CoA or acyl-ACP. The chain is Glycerol-3-phosphate acyltransferase from Rhizobium meliloti (strain 1021) (Ensifer meliloti).